The primary structure comprises 358 residues: Vascular endothelial growth factor D (358 aa).

Positions 1-21 (MYGEWGMGNILMMFHVYLVQG) are cleaved as a signal peptide. Residues 22–93 (FRSEHGPVKD…SRSASHRSTR (72 aa)) constitute a propeptide that is removed on maturation. Cystine bridges form between Cys116–Cys158, Cys147–Cys194, and Cys151–Cys196. Asn160 and Asn190 each carry an N-linked (GlcNAc...) asparagine glycan. Positions 211–358 (SIQTPEEDEC…AQGLYSQENP (148 aa)) are excised as a propeptide. The 1; approximate repeat unit spans residues 227–242 (CPIDMLWDNTKCKCVL). Positions 227–323 (CPIDMLWDNT…PDTCSCEDRC (97 aa)) are 4 X 16 AA repeats of C-X(10)-C-X-C-X(1,3)-C. 3 consecutive repeat copies span residues 263-278 (CGPH…ECVC), 282-298 (CPGD…CFEC), and 306-323 (CQKH…EDRC). N-linked (GlcNAc...) asparagine glycosylation occurs at Asn292.

This sequence belongs to the PDGF/VEGF growth factor family. Homodimer; non-covalent and antiparallel. Undergoes a complex proteolytic maturation which generates a variety of processed secreted forms with increased activity toward VEGFR-3 and VEGFR-2. VEGF-D first form an antiparallel homodimer linked by disulfide bonds before secretion. The fully processed VEGF-D is composed mostly of two VEGF homology domains (VHDs) bound by non-covalent interactions. As to expression, highly expressed in fetal and adult lung.

It is found in the secreted. Growth factor active in angiogenesis, lymphangiogenesis and endothelial cell growth, stimulating their proliferation and migration and also has effects on the permeability of blood vessels. May function in the formation of the venous and lymphatic vascular systems during embryogenesis, and also in the maintenance of differentiated lymphatic endothelium in adults. Binds and activates VEGFR-3 (Flt4) receptor. This Mus musculus (Mouse) protein is Vascular endothelial growth factor D.